Consider the following 584-residue polypeptide: MLKKKGFSTSFPNEDFIDNQDTISNFKIKKEDFLLDFDDTYEQLNMTTPKGKIIIQGQENHSPFSLKSFSNLSFDYNRPLSPKTHILNIQDNNNNNYSPILKRVNKTISPSLVSSTNRFKNSLSCSSSSPSSSSSSSSSSPRLISTPPIISTPSSPMILTSSLDKFDEILSENEFMSLDNSVTSSSSSPSSSSCSSPIVIKTNATTSTKIVTPSSSPSSSYIEDAPSTPSPSKLFQSLSFKSPCSSPSSSSSSTTTPKSSINGGNIIKKQLFSNKRIQDIKIEKPSTKIDLHPSKLQIKSNLKIKPSLPYNSTEVTANTKTTTSTTTTTNTTIPTLSKNIIKRTSSVGLSPTLSSTQLVNKSSRKSISAATTTTITPHNNNSTMTTKTPSKRSLDTSNLSTPKSTSSTINKAFTTSTTPLKKPRMSMTPLSSSSSSSTTPSKFINPLPSSSSKTTTTITNSKRLSTLSKPSPITPITPTITKTTATTTTTTTTTPNKPTNKRLSTLVNTAQKPRKSYAPPPSSHISDELEQRIQEALLAEANGNYTGGSVLTHSSPQKVEQSEWSPIRKKSTLHDVHACTKKNY.

Disordered regions lie at residues Leu-123–Pro-156, Lys-209–Gly-264, and Ser-355–Thr-479. Low complexity-rich tracts occupy residues Ser-237–Ser-260 and Ser-366–Thr-376. 2 stretches are compositionally biased toward polar residues: residues Pro-377–Thr-388 and Asp-395–Pro-419. The segment covering Met-425–Thr-479 has biased composition (low complexity).

This is an uncharacterized protein from Dictyostelium discoideum (Social amoeba).